A 33-amino-acid chain; its full sequence is Cecropin-C (33 aa).

Lys-21 is subject to 5-hydroxylysine.

As to quaternary structure, monomer. As to expression, hemolymph.

It localises to the secreted. Cecropins have lytic and antibacterial activity against several Gram-positive and Gram-negative bacteria. Also has activity against fungi. The sequence is that of Cecropin-C from Heliothis virescens (Tobacco budworm moth).